The following is a 420-amino-acid chain: F420-non-reducing hydrogenase vhu subunit A (420 aa).

Ni(2+)-binding residues include C61 and C64.

This sequence belongs to the [NiFe]/[NiFeSe] hydrogenase large subunit family. The F420-non-reducing hydrogenase vhu is composed of four subunits; VhuA, VhuD, VhuG and VhuU. It depends on Ni(2+) as a cofactor.

This is F420-non-reducing hydrogenase vhu subunit A (vhuA) from Methanococcus voltae.